The chain runs to 367 residues: UDP-N-acetylglucosamine--N-acetylmuramyl-(pentapeptide) pyrophosphoryl-undecaprenol N-acetylglucosamine transferase (367 aa).

Residues 15-17 (TGG), asparagine 127, arginine 163, serine 191, isoleucine 249, and glutamine 294 each bind UDP-N-acetyl-alpha-D-glucosamine.

Belongs to the glycosyltransferase 28 family. MurG subfamily.

It is found in the cell inner membrane. The catalysed reaction is di-trans,octa-cis-undecaprenyl diphospho-N-acetyl-alpha-D-muramoyl-L-alanyl-D-glutamyl-meso-2,6-diaminopimeloyl-D-alanyl-D-alanine + UDP-N-acetyl-alpha-D-glucosamine = di-trans,octa-cis-undecaprenyl diphospho-[N-acetyl-alpha-D-glucosaminyl-(1-&gt;4)]-N-acetyl-alpha-D-muramoyl-L-alanyl-D-glutamyl-meso-2,6-diaminopimeloyl-D-alanyl-D-alanine + UDP + H(+). The protein operates within cell wall biogenesis; peptidoglycan biosynthesis. Cell wall formation. Catalyzes the transfer of a GlcNAc subunit on undecaprenyl-pyrophosphoryl-MurNAc-pentapeptide (lipid intermediate I) to form undecaprenyl-pyrophosphoryl-MurNAc-(pentapeptide)GlcNAc (lipid intermediate II). In Burkholderia cenocepacia (strain HI2424), this protein is UDP-N-acetylglucosamine--N-acetylmuramyl-(pentapeptide) pyrophosphoryl-undecaprenol N-acetylglucosamine transferase.